The sequence spans 432 residues: UPF0597 protein APL_1605 (432 aa).

Belongs to the UPF0597 family.

The chain is UPF0597 protein APL_1605 from Actinobacillus pleuropneumoniae serotype 5b (strain L20).